The sequence spans 251 residues: Plant UBX domain-containing protein 1 (251 aa).

Residue methionine 1 is modified to N-acetylmethionine. One can recognise a UBX domain in the interval 104-180 (SKLTKAVIRV…GFVPGAIVYF (77 aa)). The interval 212-251 (AVEPVESSSEPATVDSSAVPVEHERKSTEKKTTKPKWFKM) is disordered. Over residues 217–227 (ESSSEPATVDS) the composition is skewed to polar residues. The span at 232 to 243 (VEHERKSTEKKT) shows a compositional bias: basic and acidic residues.

In terms of assembly, interacts with CDC48A (non-hexameric) via its UBX-containing C-terminal domain.

Its subcellular location is the cytoplasm. Functionally, regulates CDC48A by inhibiting its ATPase activity and by promoting the disassembly of the active hexamer. This is Plant UBX domain-containing protein 1 from Arabidopsis thaliana (Mouse-ear cress).